Consider the following 283-residue polypeptide: Polyamine aminopropyltransferase (283 aa).

In terms of domain architecture, PABS spans 5-238; it reads STWIDEYHKG…GIWSWTFASE (234 aa). Gln-32 serves as a coordination point for S-methyl-5'-thioadenosine. Spermidine is bound by residues His-63 and Asp-87. S-methyl-5'-thioadenosine contacts are provided by residues Glu-107 and 139-140; that span reads DG. Residue Asp-158 is the Proton acceptor of the active site. 158 to 161 is a binding site for spermidine; the sequence is DCSD.

Belongs to the spermidine/spermine synthase family. Homodimer or homotetramer.

The protein resides in the cytoplasm. It carries out the reaction S-adenosyl 3-(methylsulfanyl)propylamine + putrescine = S-methyl-5'-thioadenosine + spermidine + H(+). It participates in amine and polyamine biosynthesis; spermidine biosynthesis; spermidine from putrescine: step 1/1. In terms of biological role, catalyzes the irreversible transfer of a propylamine group from the amino donor S-adenosylmethioninamine (decarboxy-AdoMet) to putrescine (1,4-diaminobutane) to yield spermidine. The protein is Polyamine aminopropyltransferase of Prochlorococcus marinus (strain MIT 9312).